The chain runs to 149 residues: Large ribosomal subunit protein eL8 (149 aa).

This sequence belongs to the eukaryotic ribosomal protein eL8 family. In terms of assembly, part of the 50S ribosomal subunit. Probably part of the RNase P complex.

Its subcellular location is the cytoplasm. Its function is as follows. Multifunctional RNA-binding protein that recognizes the K-turn motif in ribosomal RNA, the RNA component of RNase P, box H/ACA, box C/D and box C'/D' sRNAs. This is Large ribosomal subunit protein eL8 from Pyrobaculum calidifontis (strain DSM 21063 / JCM 11548 / VA1).